Here is a 102-residue protein sequence, read N- to C-terminus: MDIDIIEEDENPMLHRTDVRFEVVHDEATPSRLSVRDSLAATLNKDAEEVVIHKLDTKFGMRKTVGYAKVYDNPEYARDVEQDHMLERNKIVADGEEEAEEA.

This sequence belongs to the eukaryotic ribosomal protein eS24 family.

The protein is Small ribosomal subunit protein eS24 (rps24e) of Haloarcula marismortui (strain ATCC 43049 / DSM 3752 / JCM 8966 / VKM B-1809) (Halobacterium marismortui).